The following is a 321-amino-acid chain: MATH domain and coiled-coil domain-containing protein At3g58410 (321 aa).

Residues 6 to 128 (GKKFAWVIKN…NGELMIVAEV (123 aa)) form the MATH domain. A coiled-coil region spans residues 255 to 310 (KVDWLEKKLDQVRDKKEKERSCLAKLQETEETLLKLKQKCTELDALMDTEKAELSA).

The sequence is that of MATH domain and coiled-coil domain-containing protein At3g58410 from Arabidopsis thaliana (Mouse-ear cress).